The sequence spans 367 residues: Putative 12-oxophytodienoate reductase 11 (367 aa).

FMN contacts are provided by residues proline 26–threonine 28, alanine 59, and glutamine 101. Residue histidine 178–histidine 181 participates in substrate binding. The Proton donor role is filled by tyrosine 183. Residue arginine 230 participates in FMN binding. Arginine 270 is a binding site for substrate. FMN is bound by residues glycine 300 and glycine 321–arginine 322.

The protein belongs to the NADH:flavin oxidoreductase/NADH oxidase family. The cofactor is FMN.

Putative oxophytodienoate reductase that may be involved in the biosynthesis or metabolism of oxylipin signaling molecules. This chain is Putative 12-oxophytodienoate reductase 11 (OPR11), found in Oryza sativa subsp. japonica (Rice).